A 196-amino-acid chain; its full sequence is Putative NADH dehydrogenase/NAD(P)H nitroreductase SCO5049 (196 aa).

It belongs to the nitroreductase family. HadB/RutE subfamily. It depends on FMN as a cofactor.

The sequence is that of Putative NADH dehydrogenase/NAD(P)H nitroreductase SCO5049 from Streptomyces coelicolor (strain ATCC BAA-471 / A3(2) / M145).